Here is a 342-residue protein sequence, read N- to C-terminus: Methionyl-tRNA formyltransferase (342 aa).

108–111 (SLLP) lines the (6S)-5,6,7,8-tetrahydrofolate pocket.

The protein belongs to the Fmt family.

It carries out the reaction L-methionyl-tRNA(fMet) + (6R)-10-formyltetrahydrofolate = N-formyl-L-methionyl-tRNA(fMet) + (6S)-5,6,7,8-tetrahydrofolate + H(+). Its function is as follows. Attaches a formyl group to the free amino group of methionyl-tRNA(fMet). The formyl group appears to play a dual role in the initiator identity of N-formylmethionyl-tRNA by promoting its recognition by IF2 and preventing the misappropriation of this tRNA by the elongation apparatus. This is Methionyl-tRNA formyltransferase from Prochlorococcus marinus (strain MIT 9303).